Here is a 266-residue protein sequence, read N- to C-terminus: 4-hydroxy-tetrahydrodipicolinate reductase (266 aa).

10-15 (GPRGRM) provides a ligand contact to NAD(+). Lysine 38 is a binding site for NADP(+). NAD(+) contacts are provided by residues 99–101 (GTT) and 125–128 (APNF). Histidine 155 (proton donor/acceptor) is an active-site residue. Histidine 156 contributes to the (S)-2,3,4,5-tetrahydrodipicolinate binding site. Catalysis depends on lysine 159, which acts as the Proton donor. Position 165–166 (165–166 (GT)) interacts with (S)-2,3,4,5-tetrahydrodipicolinate.

This sequence belongs to the DapB family.

Its subcellular location is the cytoplasm. The catalysed reaction is (S)-2,3,4,5-tetrahydrodipicolinate + NAD(+) + H2O = (2S,4S)-4-hydroxy-2,3,4,5-tetrahydrodipicolinate + NADH + H(+). It carries out the reaction (S)-2,3,4,5-tetrahydrodipicolinate + NADP(+) + H2O = (2S,4S)-4-hydroxy-2,3,4,5-tetrahydrodipicolinate + NADPH + H(+). It functions in the pathway amino-acid biosynthesis; L-lysine biosynthesis via DAP pathway; (S)-tetrahydrodipicolinate from L-aspartate: step 4/4. Catalyzes the conversion of 4-hydroxy-tetrahydrodipicolinate (HTPA) to tetrahydrodipicolinate. In Bacillus cereus (strain B4264), this protein is 4-hydroxy-tetrahydrodipicolinate reductase.